Here is a 216-residue protein sequence, read N- to C-terminus: Large ribosomal subunit protein bL25 (216 aa).

A disordered region spans residues 191–216; sequence LVSAESEEDEDAPAADEVPATEVSEE. Residues 195–204 show a composition bias toward acidic residues; that stretch reads ESEEDEDAPA.

The protein belongs to the bacterial ribosomal protein bL25 family. CTC subfamily. Part of the 50S ribosomal subunit; part of the 5S rRNA/L5/L18/L25 subcomplex. Contacts the 5S rRNA. Binds to the 5S rRNA independently of L5 and L18.

In terms of biological role, this is one of the proteins that binds to the 5S RNA in the ribosome where it forms part of the central protuberance. The polypeptide is Large ribosomal subunit protein bL25 (Jannaschia sp. (strain CCS1)).